Reading from the N-terminus, the 201-residue chain is Alpha-1-acid glycoprotein 2 (201 aa).

The N-terminal stretch at M1 to A18 is a signal peptide. Pyrrolidone carboxylic acid is present on Q19. Cystine bridges form between C23–C165 and C90–C183. N-linked (GlcNAc...) (complex) asparagine glycosylation is present at N33. 4 N-linked (GlcNAc...) asparagine glycosylation sites follow: N56, N72, N93, and N103.

Belongs to the calycin superfamily. Lipocalin family. Post-translationally, N-glycosylated. N-glycan heterogeneity at Asn-33: Hex5HexNAc4 (minor), Hex6HexNAc5 (major) and dHex1Hex6HexNAc5 (minor). Expressed by the liver and secreted in plasma.

It is found in the secreted. Functionally, functions as a transport protein in the blood stream. Binds various hydrophobic ligands in the interior of its beta-barrel domain. Also binds synthetic drugs and influences their distribution and availability. Appears to function in modulating the activity of the immune system during the acute-phase reaction. The chain is Alpha-1-acid glycoprotein 2 (ORM2) from Homo sapiens (Human).